Reading from the N-terminus, the 820-residue chain is Leucine--tRNA ligase (820 aa).

A 'HIGH' region motif is present at residues 42-52 (PYPSGDLHMGH). Positions 576 to 580 (KMSKS) match the 'KMSKS' region motif. Residue lysine 579 participates in ATP binding.

Belongs to the class-I aminoacyl-tRNA synthetase family.

Its subcellular location is the cytoplasm. It catalyses the reaction tRNA(Leu) + L-leucine + ATP = L-leucyl-tRNA(Leu) + AMP + diphosphate. This is Leucine--tRNA ligase from Coxiella burnetii (strain CbuK_Q154) (Coxiella burnetii (strain Q154)).